We begin with the raw amino-acid sequence, 393 residues long: S-adenosylmethionine synthase (393 aa).

Position 9 (Glu9) interacts with Mg(2+). His15 contributes to the ATP binding site. Glu43 contacts K(+). L-methionine-binding residues include Glu56 and Gln99. ATP contacts are provided by residues 167 to 169 (DGK), 235 to 238 (SGRF), Asp246, 252 to 253 (RK), Ala269, Lys273, and Lys277. Residue Asp246 participates in L-methionine binding. An L-methionine-binding site is contributed by Lys277.

It belongs to the AdoMet synthase family. In terms of assembly, homotetramer. Requires Mn(2+) as cofactor. The cofactor is Mg(2+). Co(2+) serves as cofactor. K(+) is required as a cofactor.

It is found in the cytoplasm. It catalyses the reaction L-methionine + ATP + H2O = S-adenosyl-L-methionine + phosphate + diphosphate. It functions in the pathway amino-acid biosynthesis; S-adenosyl-L-methionine biosynthesis; S-adenosyl-L-methionine from L-methionine: step 1/1. Its function is as follows. Catalyzes the formation of S-adenosylmethionine from methionine and ATP. The reaction comprises two steps that are both catalyzed by the same enzyme: formation of S-adenosylmethionine (AdoMet) and triphosphate, and subsequent hydrolysis of the triphosphate. This Solanum palustre (Non-tuber-performing potato) protein is S-adenosylmethionine synthase (SAMS).